The chain runs to 241 residues: Eukaryotic translation initiation factor 3 subunit J (241 aa).

The span at 1–27 shows a compositional bias: basic and acidic residues; that stretch reads MEEDWEQHGEKEEVPLPAKKPDANKWD. Residues 1–99 form a disordered region; the sequence is MEEDWEQHGE…ENMTPEQKLA (99 aa). Over residues 28–45 the composition is skewed to acidic residues; the sequence is GEDEEEEVKDSWEDEDEL. Residues 31–119 adopt a coiled-coil conformation; the sequence is EEEEVKDSWE…ESDLKNALDT (89 aa). Composition is skewed to basic and acidic residues over residues 46-58 and 69-90; these read EEKKDEEKVETPK and IVEKEKQKHEEAERRRLEKEAE.

The protein belongs to the eIF-3 subunit J family. As to quaternary structure, component of the eukaryotic translation initiation factor 3 (eIF-3) complex.

The protein resides in the cytoplasm. Its function is as follows. Component of the eukaryotic translation initiation factor 3 (eIF-3) complex, which is involved in protein synthesis of a specialized repertoire of mRNAs and, together with other initiation factors, stimulates binding of mRNA and methionyl-tRNAi to the 40S ribosome. The eIF-3 complex specifically targets and initiates translation of a subset of mRNAs involved in cell proliferation. The chain is Eukaryotic translation initiation factor 3 subunit J from Culex quinquefasciatus (Southern house mosquito).